Consider the following 334-residue polypeptide: MALPEFSMRQLLEAGVHFGHQSHRWNPKMAEYIFGARNNIHIIDLAQTVPLLHRALQAVSDTVAKGGRVLFVGTKRQAQDGVAEAAKRSAQYFVNSRWLGGTLTNWKTISGSIKRLRHLDEVLNSGDANAYTKKERLTLQRERDKLDRSLGGIKDMGGLPDLIFVIDTNKEDIAIQEAQRLNIPVAAIVDTNCDPKGITYLVPGNDDAGRAITLYCDLIARAVIDGISRAQGDSGFDIGASVAPVREELPAAAAPTATAFQGLAGPRGTADDLKKLTGVSGAIEKKFNDLGIFHFWQLAELDRDTAHKIGEEVGLPSRADGWVAQAKAMTAEAE.

This sequence belongs to the universal ribosomal protein uS2 family.

This is Small ribosomal subunit protein uS2 from Rhodopseudomonas palustris (strain BisB18).